A 921-amino-acid polypeptide reads, in one-letter code: Protein translocase subunit SecA (921 aa).

Residues Gln85, 103–107 (GEGKT), and Asp514 each bind ATP. Zn(2+) contacts are provided by Cys905, Cys907, Cys916, and His917.

Belongs to the SecA family. As to quaternary structure, monomer and homodimer. Part of the essential Sec protein translocation apparatus which comprises SecA, SecYEG and auxiliary proteins SecDF-YajC and YidC. It depends on Zn(2+) as a cofactor.

The protein resides in the cell inner membrane. It localises to the cytoplasm. It carries out the reaction ATP + H2O + cellular proteinSide 1 = ADP + phosphate + cellular proteinSide 2.. Part of the Sec protein translocase complex. Interacts with the SecYEG preprotein conducting channel. Has a central role in coupling the hydrolysis of ATP to the transfer of proteins into and across the cell membrane, serving both as a receptor for the preprotein-SecB complex and as an ATP-driven molecular motor driving the stepwise translocation of polypeptide chains across the membrane. This chain is Protein translocase subunit SecA, found in Herminiimonas arsenicoxydans.